The chain runs to 180 residues: Beta-lactoglobulin (180 aa).

A signal peptide spans 1–18 (MKCLLLALGLALACAAQA). Intrachain disulfides connect Cys84–Cys178, Cys124–Cys137, and Cys124–Cys139.

This sequence belongs to the calycin superfamily. Lipocalin family. As to quaternary structure, under physiological conditions beta-lactoglobulin exists as an equilibrium mixture of monomeric and dimeric forms. Interaction with LMBR1L is controversial. Post-translationally, alternate disulfide bonds occur in equal amounts. In terms of tissue distribution, synthesized in mammary gland and secreted in milk.

The protein resides in the secreted. Functionally, primary component of whey, it binds retinol and is probably involved in the transport of that molecule. The polypeptide is Beta-lactoglobulin (LGB) (Bubalus bubalis (Domestic water buffalo)).